The chain runs to 466 residues: MTLGLVESSRNAAFAVAAHAPVLGLILLGSIVAYVGTLRYIPNVARTLLDRNIFGIDINKSTEEQRQKFAAKRRAGQTEEKEFQKQAIPESLGILVGAMYLSVVVVLTVCLRFLGAAGEGLDNPYASLPGPLMTITVMLLLGFVDDVLDVKWRHKIILTALGSLPLIMTYDGSLSVLMPCAFGRFGLSTMNVMKEWRLGLAAPQGEPTTTFRATAPSTWFSFTVNHRSYVKVTESGAALIYLGPVYLVYLSMLCIFCTNSINILAGVNGVEVGQSIVIAVASVVYNLFQMRLDRQLTPDFSSLDAAAADARDMTSDHQLRALLLLGPFIGVSLALWRYNRYPARVFVGDSYTYFAGTVLAVSSITGVYSKTLLLFFAPQVFNFLISLPQLFSIVPCPRHRVPTWNPRTNLLSNSHNYTILNVILYLFGDMHEAKLTWAILKCQVIACVLGFVVRYVLSAFLYDEVR.

A helical membrane pass occupies residues 12–32 (AAFAVAAHAPVLGLILLGSIV). Position 57 (Asp57) interacts with UDP-N-acetyl-alpha-D-glucosamine. The N-linked (GlcNAc...) asparagine glycan is linked to Asn59. Glu90 lines the UDP-N-acetyl-alpha-D-glucosamine pocket. 2 helical membrane passes run 91-111 (SLGILVGAMYLSVVVVLTVCL) and 124-144 (PYASLPGPLMTITVMLLLGFV). Residue Lys155 participates in dolichyl phosphate binding. 2 consecutive transmembrane segments (helical) span residues 156–176 (IILTALGSLPLIMTYDGSLSV) and 236–256 (GAALIYLGPVYLVYLSMLCIF). 255–263 (IFCTNSINI) provides a ligand contact to dolichyl phosphate. Mg(2+) is bound at residue Asn262. The next 4 helical transmembrane spans lie at 263–283 (ILAGVNGVEVGQSIVIAVASV), 316–336 (DHQLRALLLLGPFIGVSLALW), 345–365 (VFVGDSYTYFAGTVLAVSSIT), and 374–394 (LFFAPQVFNFLISLPQLFSIV). Position 268 (Asn268) interacts with UDP-N-acetyl-alpha-D-glucosamine. Residue Asp349 coordinates Mg(2+). 398–400 (RHR) serves as a coordination point for UDP-N-acetyl-alpha-D-glucosamine. An N-linked (GlcNAc...) asparagine glycan is attached at Asn416. The helical transmembrane segment at 442–462 (CQVIACVLGFVVRYVLSAFLY) threads the bilayer.

This sequence belongs to the glycosyltransferase 4 family. Mg(2+) serves as cofactor.

The protein resides in the endoplasmic reticulum membrane. The catalysed reaction is a di-trans,poly-cis-dolichyl phosphate + UDP-N-acetyl-alpha-D-glucosamine = an N-acetyl-alpha-D-glucosaminyl-diphospho-di-trans,poly-cis-dolichol + UMP. It participates in protein modification; protein glycosylation. Its activity is regulated as follows. Inhibited by natural nucleoside antibiotic tunicamycin, which acts as a structural analog and competitor of UDP-GlcNAc. Its function is as follows. UDP-N-acetylglucosamine--dolichyl-phosphate N-acetylglucosaminephosphotransferase that operates in the biosynthetic pathway of dolichol-linked oligosaccharides, the glycan precursors employed in protein asparagine (N)-glycosylation. The assembly of dolichol-linked oligosaccharides begins on the cytosolic side of the endoplasmic reticulum membrane and finishes in its lumen. The sequential addition of sugars to dolichol pyrophosphate produces dolichol-linked oligosaccharides containing fourteen sugars, including two GlcNAcs, nine mannoses and three glucoses. Once assembled, the oligosaccharide is transferred from the lipid to nascent proteins by oligosaccharyltransferases. Catalyzes the initial step of dolichol-linked oligosaccharide biosynthesis, transfering GlcNAc-1-P from cytosolic UDP-GlcNAc onto the carrier lipid dolichyl phosphate (P-dolichol), yielding GlcNAc-P-P-dolichol embedded in the cytoplasmic leaflet of the endoplasmic reticulum membrane. This chain is UDP-N-acetylglucosamine--dolichyl-phosphate N-acetylglucosaminephosphotransferase (NAGT), found in Leishmania amazonensis.